A 705-amino-acid chain; its full sequence is Structure-specific endonuclease subunit SLX1 homolog (705 aa).

The 87-residue stretch at 4–90 (RFHCVYLLTS…TASARLRHAI (87 aa)) folds into the GIY-YIG domain. 2 disordered regions span residues 155 to 192 (RASS…DSKG) and 290 to 323 (ASFA…RVHT). Polar residues-rich tracts occupy residues 160–175 (RVGT…SLQG) and 310–320 (STGSRTPSPQR). An SLX1-type zinc finger spans residues 446 to 526 (CSLCTLPLQP…PSQPCPCPLC (81 aa)). Residues 595–604 (KGAGEAPGAA) are compositionally biased toward low complexity. Residues 595 to 628 (KGAGEAPGAASTVRASTMHVGPARRDAPRVSSPS) are disordered.

The protein belongs to the SLX1 family. As to quaternary structure, forms a heterodimer with a member of the SLX4 family. A divalent metal cation is required as a cofactor.

It localises to the nucleus. In terms of biological role, catalytic subunit of a heterodimeric structure-specific endonuclease that resolves DNA secondary structures generated during DNA repair and recombination. Has endonuclease activity towards branched DNA substrates, introducing single-strand cuts in duplex DNA close to junctions with ss-DNA. This chain is Structure-specific endonuclease subunit SLX1 homolog, found in Leishmania infantum.